The following is a 273-amino-acid chain: ATP synthase subunit a (273 aa).

Transmembrane regions (helical) follow at residues 42-62 (TLNI…LFIF), 102-122 (VIAP…MMDL), 148-168 (DVSI…FYSI), 213-233 (LFGN…LLPW), and 244-264 (AIFH…LTIV).

This sequence belongs to the ATPase A chain family. F-type ATPases have 2 components, CF(1) - the catalytic core - and CF(0) - the membrane proton channel. CF(1) has five subunits: alpha(3), beta(3), gamma(1), delta(1), epsilon(1). CF(0) has three main subunits: a(1), b(2) and c(9-12). The alpha and beta chains form an alternating ring which encloses part of the gamma chain. CF(1) is attached to CF(0) by a central stalk formed by the gamma and epsilon chains, while a peripheral stalk is formed by the delta and b chains.

It localises to the cell inner membrane. Its function is as follows. Key component of the proton channel; it plays a direct role in the translocation of protons across the membrane. The polypeptide is ATP synthase subunit a (Serratia proteamaculans (strain 568)).